The following is a 489-amino-acid chain: Cysteine--tRNA ligase (489 aa).

Cysteine 27 is a binding site for Zn(2+). The 'HIGH' region signature appears at 29–39 (VTVYDLCHLGH). Residues cysteine 211, histidine 236, and glutamate 240 each contribute to the Zn(2+) site. The 'KMSKS' region signature appears at 268-272 (KMSKS). ATP is bound at residue lysine 271.

This sequence belongs to the class-I aminoacyl-tRNA synthetase family. In terms of assembly, monomer. Zn(2+) is required as a cofactor.

It is found in the cytoplasm. It carries out the reaction tRNA(Cys) + L-cysteine + ATP = L-cysteinyl-tRNA(Cys) + AMP + diphosphate. This Prochlorococcus marinus (strain MIT 9312) protein is Cysteine--tRNA ligase.